The chain runs to 321 residues: Holliday junction branch migration complex subunit RuvB (321 aa).

The large ATPase domain (RuvB-L) stretch occupies residues 1-173 (MMMEQECVDD…FGIISRLEFY (173 aa)). ATP-binding positions include isoleucine 12, arginine 13, glycine 54, lysine 57, threonine 58, threonine 59, 120–122 (EDF), arginine 163, tyrosine 173, and arginine 210. A Mg(2+)-binding site is contributed by threonine 58. Residues 174–244 (TPAELACIVK…LASDALARMD (71 aa)) form a small ATPAse domain (RuvB-S) region. The segment at 247–321 (ELGLDQMDRK…KAYRHMNLLA (75 aa)) is head domain (RuvB-H). Positions 302 and 307 each coordinate DNA.

Belongs to the RuvB family. As to quaternary structure, homohexamer. Forms an RuvA(8)-RuvB(12)-Holliday junction (HJ) complex. HJ DNA is sandwiched between 2 RuvA tetramers; dsDNA enters through RuvA and exits via RuvB. An RuvB hexamer assembles on each DNA strand where it exits the tetramer. Each RuvB hexamer is contacted by two RuvA subunits (via domain III) on 2 adjacent RuvB subunits; this complex drives branch migration. In the full resolvosome a probable DNA-RuvA(4)-RuvB(12)-RuvC(2) complex forms which resolves the HJ.

The protein resides in the cytoplasm. The catalysed reaction is ATP + H2O = ADP + phosphate + H(+). Functionally, the RuvA-RuvB-RuvC complex processes Holliday junction (HJ) DNA during genetic recombination and DNA repair, while the RuvA-RuvB complex plays an important role in the rescue of blocked DNA replication forks via replication fork reversal (RFR). RuvA specifically binds to HJ cruciform DNA, conferring on it an open structure. The RuvB hexamer acts as an ATP-dependent pump, pulling dsDNA into and through the RuvAB complex. RuvB forms 2 homohexamers on either side of HJ DNA bound by 1 or 2 RuvA tetramers; 4 subunits per hexamer contact DNA at a time. Coordinated motions by a converter formed by DNA-disengaged RuvB subunits stimulates ATP hydrolysis and nucleotide exchange. Immobilization of the converter enables RuvB to convert the ATP-contained energy into a lever motion, pulling 2 nucleotides of DNA out of the RuvA tetramer per ATP hydrolyzed, thus driving DNA branch migration. The RuvB motors rotate together with the DNA substrate, which together with the progressing nucleotide cycle form the mechanistic basis for DNA recombination by continuous HJ branch migration. Branch migration allows RuvC to scan DNA until it finds its consensus sequence, where it cleaves and resolves cruciform DNA. The chain is Holliday junction branch migration complex subunit RuvB from Oleidesulfovibrio alaskensis (strain ATCC BAA-1058 / DSM 17464 / G20) (Desulfovibrio alaskensis).